The primary structure comprises 405 residues: Acetate kinase (405 aa).

N13 is a binding site for Mg(2+). K20 contacts ATP. Position 94 (R94) interacts with substrate. The Proton donor/acceptor role is filled by D153. ATP contacts are provided by residues 213-217 (HLGNG), 288-290 (DFR), and 336-340 (GIGEN). E390 is a binding site for Mg(2+).

The protein belongs to the acetokinase family. In terms of assembly, homodimer. Requires Mg(2+) as cofactor. The cofactor is Mn(2+).

It localises to the cytoplasm. It carries out the reaction acetate + ATP = acetyl phosphate + ADP. It participates in metabolic intermediate biosynthesis; acetyl-CoA biosynthesis; acetyl-CoA from acetate: step 1/2. In terms of biological role, catalyzes the formation of acetyl phosphate from acetate and ATP. Can also catalyze the reverse reaction. The chain is Acetate kinase from Buchnera aphidicola subsp. Acyrthosiphon pisum (strain APS) (Acyrthosiphon pisum symbiotic bacterium).